The chain runs to 690 residues: Protein AC23 (690 aa).

An N-terminal signal peptide occupies residues 1–37; sequence MLACKFSQYQAFIMDGVKLLGTCALIILLSTTSTVVG.

The protein resides in the virion. Functionally, pathogenicity factor that accelerates mortality in the host insect. The chain is Protein AC23 from Autographa californica nuclear polyhedrosis virus (AcMNPV).